Reading from the N-terminus, the 338-residue chain is Nuclear hormone receptor family member nhr-52 (338 aa).

Residues 1 to 75 (MKCLVCCSYA…IGMRFSEPKQ (75 aa)) constitute a DNA-binding region (nuclear receptor). 2 consecutive NR C4-type zinc fingers follow at residues 3-23 (CLVC…CSAC) and 39-63 (CKYD…FKKC). Residues 98 to 337 (KDGVHYSNFL…KKLVNDIIIR (240 aa)) enclose the NR LBD domain.

Belongs to the nuclear hormone receptor family.

It is found in the nucleus. Functionally, orphan nuclear receptor. This Caenorhabditis elegans protein is Nuclear hormone receptor family member nhr-52 (nhr-52).